A 130-amino-acid polypeptide reads, in one-letter code: Small ribosomal subunit protein uS9 (130 aa).

The protein belongs to the universal ribosomal protein uS9 family.

This is Small ribosomal subunit protein uS9 from Burkholderia pseudomallei (strain K96243).